Consider the following 453-residue polypeptide: UDP-N-acetylmuramoylalanine--D-glutamate ligase (453 aa).

Position 119-125 (119-125) interacts with ATP; it reads GTNGKTT.

It belongs to the MurCDEF family.

It localises to the cytoplasm. It catalyses the reaction UDP-N-acetyl-alpha-D-muramoyl-L-alanine + D-glutamate + ATP = UDP-N-acetyl-alpha-D-muramoyl-L-alanyl-D-glutamate + ADP + phosphate + H(+). It functions in the pathway cell wall biogenesis; peptidoglycan biosynthesis. Functionally, cell wall formation. Catalyzes the addition of glutamate to the nucleotide precursor UDP-N-acetylmuramoyl-L-alanine (UMA). This Syntrophus aciditrophicus (strain SB) protein is UDP-N-acetylmuramoylalanine--D-glutamate ligase.